A 425-amino-acid chain; its full sequence is Serine--tRNA ligase (425 aa).

230 to 232 (TAE) contacts L-serine. 261 to 263 (RSE) is an ATP binding site. Glu284 serves as a coordination point for L-serine. 348–351 (EISS) serves as a coordination point for ATP. Ser384 contacts L-serine.

Belongs to the class-II aminoacyl-tRNA synthetase family. Type-1 seryl-tRNA synthetase subfamily. Homodimer. The tRNA molecule binds across the dimer.

It localises to the cytoplasm. The catalysed reaction is tRNA(Ser) + L-serine + ATP = L-seryl-tRNA(Ser) + AMP + diphosphate + H(+). It carries out the reaction tRNA(Sec) + L-serine + ATP = L-seryl-tRNA(Sec) + AMP + diphosphate + H(+). It participates in aminoacyl-tRNA biosynthesis; selenocysteinyl-tRNA(Sec) biosynthesis; L-seryl-tRNA(Sec) from L-serine and tRNA(Sec): step 1/1. Its function is as follows. Catalyzes the attachment of serine to tRNA(Ser). Is also able to aminoacylate tRNA(Sec) with serine, to form the misacylated tRNA L-seryl-tRNA(Sec), which will be further converted into selenocysteinyl-tRNA(Sec). The protein is Serine--tRNA ligase of Streptococcus pyogenes serotype M12 (strain MGAS2096).